The chain runs to 361 residues: Peptide chain release factor 1 (361 aa).

The residue at position 235 (glutamine 235) is an N5-methylglutamine.

Belongs to the prokaryotic/mitochondrial release factor family. Post-translationally, methylated by PrmC. Methylation increases the termination efficiency of RF1.

The protein localises to the cytoplasm. Functionally, peptide chain release factor 1 directs the termination of translation in response to the peptide chain termination codons UAG and UAA. The polypeptide is Peptide chain release factor 1 (Xanthomonas campestris pv. campestris (strain B100)).